We begin with the raw amino-acid sequence, 417 residues long: MLLIPSFTANSNEPPPSKLSLSDLSMAILKSHFFLLFPLLLLHFHTVSFAQTLFVFGDGLYDAGNKQFLSQNRVDASFPPYGVTVGQATGRWSDGSIVPDYLAKFMGIPKISPILLTTADFSHGANFAIADATVLGSPPETMTLSQQVKKFSENKNKWTNQTRSEAIYLIYIGSDDYLSYAKSNPSPSDTQKQAFVDQVITTIKAEIKVVYGSGGRKFAFQNLAPLGCLPAVKQASGNVQECVKLPSEMAALHNKKLLQLLVELSRELNGFQYSFYDFFSSIQNRVIKSKTYTFETGNAACCGTGSINGSNCSAKNVCAKPEEYIFFDGKHLTQEANLQVGHLMWGADPEVIGPNNIRELMVLPLDITVILAGIQEAMAAMRPRQSNIESLYDIKKMESEMDNHWLYQVDKAISFMI.

A signal peptide spans 1-50 (MLLIPSFTANSNEPPPSKLSLSDLSMAILKSHFFLLFPLLLLHFHTVSFA). N-linked (GlcNAc...) asparagine glycosylation is found at Asn-160, Asn-308, and Asn-311. The active site involves His-331.

This sequence belongs to the 'GDSL' lipolytic enzyme family. Interacts with the PYK10 complex and TGG2, but not with TGG1 or PEN2. As to expression, expressed throughout the seedling, rosette leaves, roots, inflorescence and imbibed seed, but not in pollen.

The protein localises to the vacuole. Its subcellular location is the endoplasmic reticulum. Involved in organization of the endomembrane system and is required for endoplasmic reticulum morphology and organelle distribution. May act by inhibiting the formation of PYK10 complex by binding to GLL23 and exporting it from the ER. Required for proper subcellular localization of myrosinase TGG2. Has no lipase or esterase activity. The polypeptide is Inactive GDSL esterase/lipase-like protein 25 (MVP1) (Arabidopsis thaliana (Mouse-ear cress)).